The chain runs to 349 residues: Dihydroorotate dehydrogenase (quinone) (349 aa).

Residues 67-71 and threonine 91 contribute to the FMN site; that span reads AGLDK. Lysine 71 is a substrate binding site. Residue 116–120 participates in substrate binding; that stretch reads NRLGF. Positions 147 and 180 each coordinate FMN. Asparagine 180 serves as a coordination point for substrate. Serine 183 functions as the Nucleophile in the catalytic mechanism. Residue asparagine 185 coordinates substrate. FMN contacts are provided by lysine 225 and threonine 253. Residue 254-255 coordinates substrate; that stretch reads NT. FMN contacts are provided by residues glycine 276, glycine 305, and 326-327; that span reads YT.

It belongs to the dihydroorotate dehydrogenase family. Type 2 subfamily. Monomer. FMN serves as cofactor.

It localises to the cell membrane. The enzyme catalyses (S)-dihydroorotate + a quinone = orotate + a quinol. It functions in the pathway pyrimidine metabolism; UMP biosynthesis via de novo pathway; orotate from (S)-dihydroorotate (quinone route): step 1/1. Its function is as follows. Catalyzes the conversion of dihydroorotate to orotate with quinone as electron acceptor. This is Dihydroorotate dehydrogenase (quinone) from Bordetella avium (strain 197N).